The chain runs to 1095 residues: Tyrosine-sulfated glycopeptide receptor 1 (1095 aa).

The chain crosses the membrane as a helical span at residues 23–43; that stretch reads PHMVLFVLLYVLSISVFFLTV. Residues Asn62 and Asn73 are each glycosylated (N-linked (GlcNAc...) asparagine). LRR repeat units follow at residues 91–115, 116–139, 141–165, 170–195, 197–221, 223–246, 247–270, 271–294, 295–318, 320–342, 344–366, 367–391, 393–415, 416–439, 441–466, 470–494, 495–517, 518–542, and 566–589; these read ENRV…VLDL, QRLS…FLSA, DQLL…SFGN, IFPI…VFLQ, AFNL…MCTA, PQLT…LSRC, SRLS…IYNL, PELE…ITRL, TKLT…IGKL, KLSS…LANC, KLVK…DFSR, FQSL…VYSC, MMTA…VLEL, ESLS…SILQ, CKKL…DFLR, FPSL…LIKL, QRVE…WLGT, LPDL…LFQL, and NPNN…IYIK. N-linked (GlcNAc...) asparagine glycosylation occurs at Asn165. N-linked (GlcNAc...) asparagine glycans are attached at residues Asn199, Asn204, and Asn207. A glycan (N-linked (GlcNAc...) asparagine) is linked at Asn258. N-linked (GlcNAc...) asparagine glycosylation is present at Asn341. N-linked (GlcNAc...) asparagine glycosylation is present at Asn377. A glycan (N-linked (GlcNAc...) asparagine) is linked at Asn430. Residues Asn569, Asn592, Asn616, Asn627, Asn640, Asn662, and Asn714 are each glycosylated (N-linked (GlcNAc...) asparagine). LRR repeat units follow at residues 604–628, 629–652, and 654–677; these read LKVL…LSNL, TNLE…LTGL, and FLSY…QFDT. Residues 721-741 form a helical membrane-spanning segment; the sequence is LVLGLFFGVSLILVLLALLVL. 2 positions are modified to phosphothreonine: Thr792 and Thr800. Residues 803–1074 form the Protein kinase domain; the sequence is FSQANIIGCG…PNIQQVVDWL (272 aa). ATP-binding positions include 809–817 and Lys831; that span reads IGCGGFGLV. Phosphotyrosine is present on residues Tyr876 and Tyr916. Asp929 functions as the Proton acceptor in the catalytic mechanism. Tyr971 bears the Phosphotyrosine mark.

It belongs to the protein kinase superfamily. Ser/Thr protein kinase family. In terms of assembly, homo- and heterodimers with PSKR1. Interacts (via C-terminus) with AHA1 and AHA2 (via the R-domain). Autophosphorylated. In terms of tissue distribution, expressed ubiquitously, including in the shoot apical meristem and in the elongation zone of the root meristem.

It localises to the cell membrane. The enzyme catalyses L-seryl-[protein] + ATP = O-phospho-L-seryl-[protein] + ADP + H(+). It carries out the reaction L-threonyl-[protein] + ATP = O-phospho-L-threonyl-[protein] + ADP + H(+). Its function is as follows. Tyrosine-sulfated glycopeptide receptor with a serine/threonine-protein kinase activity. Regulates, in response to tyrosine-sulfated glycopeptide binding, a signaling cascade involved in cellular proliferation and plant growth. Not involved in PSK perception. Involved in plant immunity, with antagonistic effects on bacterial and fungal resistances. Mediates activation of the plasma membrane H(+)-ATPase by PSY1. Phosphorylates AHA2 at Thr-881. The chain is Tyrosine-sulfated glycopeptide receptor 1 from Arabidopsis thaliana (Mouse-ear cress).